Reading from the N-terminus, the 656-residue chain is Translation factor GUF1 homolog, mitochondrial (656 aa).

One can recognise a tr-type G domain in the interval 55 to 236 (QRIRNFSIIA…EIVRRLPPPD (182 aa)). GTP contacts are provided by residues 64–71 (AHVDHGKS), 129–133 (DTPGH), and 183–186 (NKID).

Belongs to the TRAFAC class translation factor GTPase superfamily. Classic translation factor GTPase family. LepA subfamily.

The protein localises to the mitochondrion inner membrane. The catalysed reaction is GTP + H2O = GDP + phosphate + H(+). Its function is as follows. Promotes mitochondrial protein synthesis. May act as a fidelity factor of the translation reaction, by catalyzing a one-codon backward translocation of tRNAs on improperly translocated ribosomes. Binds to mitochondrial ribosomes in a GTP-dependent manner. The polypeptide is Translation factor GUF1 homolog, mitochondrial (Aedes aegypti (Yellowfever mosquito)).